The primary structure comprises 229 residues: Non-structural protein P8 (229 aa).

2 helical membrane-spanning segments follow: residues isoleucine 119 to leucine 139 and serine 162 to alanine 182.

It belongs to the orbivirus NS3 family. In terms of assembly, forms homooligomers via coiled-coil motif. Interacts with host OPTN; this interaction inhibits innate immune response.

The protein resides in the host cell membrane. The protein localises to the host Golgi apparatus. Its function is as follows. Plays a role in the inhibition of host innate immune response. Interacts with host OPTN and thus inhibits the recruitment of TBK1 to the host Golgi apparatus. In turn, downstream partner IRF3 cannot be activated and IFN-beta production is impaired. Facilitates viral particle release either by increasing plasma membrane permeability through a viroporin-like activity or by viral budding. This is Non-structural protein P8 (Segment-10) from Bluetongue virus 17 (isolate USA) (BTV 17).